Consider the following 175-residue polypeptide: Calcineurin subunit B (175 aa).

EF-hand domains lie at 21–56, 60–88, 90–125, and 131–166; these read DEIE…SANP, RIME…FSGR, SKDE…MVGS, and QLQQ…TEVA. Asp34, Asp36, Ser38, Ser40, Glu45, Asp66, Asp68, Ser70, Asp72, Glu77, Asp103, Asp105, Asp107, Glu114, Asp144, Asp146, Asp148, Gln150, and Glu155 together coordinate Ca(2+).

The protein belongs to the calcineurin regulatory subunit family. As to quaternary structure, composed of a catalytic subunit (A) and a regulatory subunit (B).

In terms of biological role, regulatory subunit of calcineurin, a calcium-dependent, calmodulin stimulated protein phosphatase. Confers calcium sensitivity. This Candida glabrata (strain ATCC 2001 / BCRC 20586 / JCM 3761 / NBRC 0622 / NRRL Y-65 / CBS 138) (Yeast) protein is Calcineurin subunit B (CNB1).